The chain runs to 536 residues: Butyrophilin-like protein 9 (536 aa).

Positions 1–35 are cleaved as a signal peptide; that stretch reads MADFSVFLGFLKQIPRCLSIFFTYLLFLQLWEVNS. Ig-like V-type domains are found at residues 36 to 149 and 152 to 241; these read DKVW…WELE and GSGS…KEFV. Over 36-257 the chain is Extracellular; sequence DKVWVLGPEE…FLPRMSPWKK (222 aa). Cysteines 59 and 133 form a disulfide. 3 N-linked (GlcNAc...) asparagine glycosylation sites follow: N102, N139, and N224. A disulfide bridge connects residues C173 and C227. A helical transmembrane segment spans residues 258–278; the sequence is AFVGTLVVLPLSLIVLTMLAL. The Cytoplasmic segment spans residues 279–536; sequence RYFYKLRSFQ…PAWAVNEAVS (258 aa). Residues 307–506 form the B30.2/SPRY domain; it reads DWRRSEGQAE…MTICSLPVRG (200 aa).

The protein belongs to the immunoglobulin superfamily. BTN/MOG family.

It localises to the membrane. The polypeptide is Butyrophilin-like protein 9 (Btnl9) (Mus musculus (Mouse)).